A 163-amino-acid polypeptide reads, in one-letter code: Putative pre-16S rRNA nuclease (163 aa).

Belongs to the YqgF nuclease family.

Its subcellular location is the cytoplasm. In terms of biological role, could be a nuclease involved in processing of the 5'-end of pre-16S rRNA. The polypeptide is Putative pre-16S rRNA nuclease (Chlamydia caviae (strain ATCC VR-813 / DSM 19441 / 03DC25 / GPIC) (Chlamydophila caviae)).